Here is a 644-residue protein sequence, read N- to C-terminus: MGQLLSLTWLLLVMVVTPWFTVAGANDSPEARRCSECHDNATCVLDGVVTTCSCQAGFTGDGLVCEDIDECATPWTHNCSNSICMNTLGSYECSCQDGFRLTPGLGCIDVNECTEQGLSNCHSLATCVNTEGSYSCVCPKGYRGDGWYCECSPGFCEPGLDCLPQGPSGKLVCQDPCNVYETLTEYWRSTDYGAGYSCDSDMHGWYRFTGQGGVRMAETCVPVLRCNTAAPMWLNGSHPSSREGIVSRTACAHWSDHCCLWSTEIQVKACPGGFYVYNLTEPPECNLAYCTDPSSVEGTCEECGVDEDCVSDNGRWRCQCKQDFNVTDVSLLEHRLECEANEIKISLSKCQLQSLGFMKVFMYLNDRQCSGFSERGERDWMSIVTPARDGPCGTVLRRNETHATYSNTLYLASEIIIRDINIRINFECSYPLDMKVSLKTSLQPMVSALNISLGGTGKFTVQMALFQNPTYTQPYQGPSVMLSTEAFLYVGTMLDGGDLSRFVLLMTNCYATPSSNSTDPVKYFIIQDRCPHTEDTTIQVTENGESSQARFSIQMFRFAGNSDLVYLHCEVYLCDTMSEQCKPTCSGTRYRSGNFIDQTRVLNLGPITRQGVQASVSKAASSNLGFLSIWLLLFLSATLTLMVH.

The signal sequence occupies residues 1–26 (MGQLLSLTWLLLVMVVTPWFTVAGAN). The EGF-like 1 domain occupies 30-66 (EARRCSECHDNATCVLDGVVTTCSCQAGFTGDGLVCE). Disulfide bonds link Cys-34–Cys-43, Cys-37–Cys-52, Cys-54–Cys-65, Cys-71–Cys-84, Cys-79–Cys-93, Cys-95–Cys-107, Cys-113–Cys-127, Cys-121–Cys-136, Cys-138–Cys-149, Cys-151–Cys-162, Cys-156–Cys-173, Cys-177–Cys-270, Cys-198–Cys-285, Cys-220–Cys-258, Cys-226–Cys-290, Cys-251–Cys-259, Cys-300–Cys-309, Cys-303–Cys-318, Cys-320–Cys-350, Cys-338–Cys-428, and Cys-369–Cys-392. An N-linked (GlcNAc...) asparagine glycan is attached at Asn-40. The EGF-like 2; calcium-binding domain occupies 67–108 (DIDECATPWTHNCSNSICMNTLGSYECSCQDGFRLTPGLGCI). Asn-78 carries N-linked (GlcNAc...) asparagine glycosylation. Residues 109–150 (DVNECTEQGLSNCHSLATCVNTEGSYSCVCPKGYRGDGWYCE) form the EGF-like 3; calcium-binding domain. Residues 151–174 (CSPGFCEPGLDCLPQGPSGKLVCQ) form a beta hairpin region. Residues 175–294 (DPCNVYETLT…CNLAYCTDPS (120 aa)) are D10C. An N-linked (GlcNAc...) asparagine glycan is attached at Asn-235. Asn-278 carries an N-linked (GlcNAc...) asparagine glycan. Residues 295–326 (SVEGTCEECGVDEDCVSDNGRWRCQCKQDFNV) enclose the EGF-like 4 domain. An N-linked (GlcNAc...) asparagine glycan is attached at Asn-325. The tract at residues 337-432 (ECEANEIKIS…RINFECSYPL (96 aa)) is ZP-N. The 256-residue stretch at 337-592 (ECEANEIKIS…PTCSGTRYRS (256 aa)) folds into the ZP domain. 2 N-linked (GlcNAc...) asparagine glycosylation sites follow: Asn-399 and Asn-450. The tract at residues 433–456 (DMKVSLKTSLQPMVSALNISLGGT) is flexible ZP-N/ZP-C linker; important for secretion and polymerization into filaments. The tract at residues 457-467 (GKFTVQMALFQ) is internal hydrophobic patch (IHP). The tract at residues 457-592 (GKFTVQMALF…PTCSGTRYRS (136 aa)) is ZP-C. Intrachain disulfides connect Cys-509–Cys-569, Cys-530–Cys-585, and Cys-574–Cys-581. Residue Asn-516 is glycosylated (N-linked (GlcNAc...) asparagine). Residues 589 to 592 (RYRS) form an essential for cleavage by HPN region. The segment at 601–609 (VLNLGPITR) is external hydrophobic patch (EHP); regulates polymerization into filaments. The GPI-anchor amidated serine moiety is linked to residue Ser-615. A propeptide spans 616–644 (VSKAASSNLGFLSIWLLLFLSATLTLMVH) (removed in mature form).

Homodimer that then polymerizes into long filaments. The filaments can additionally assemble laterally to form a sheet. The filaments consist of a zigzag-shaped backbone with laterally protruding arms which interact with bacterial adhesin fimH. Two fimH molecules can bind to a single UMOD monomer. In terms of processing, N-glycosylated. Post-translationally, proteolytically cleaved at a conserved C-terminal proteolytic cleavage site to generate the secreted form found in urine. This cleavage is catalyzed by HPN. Expression restricted to the thick ascending limb of the loop of Henle (TALH).

The protein localises to the apical cell membrane. It localises to the basolateral cell membrane. The protein resides in the cell projection. It is found in the cilium membrane. Its subcellular location is the secreted. Functionally, functions in biogenesis and organization of the apical membrane of epithelial cells of the thick ascending limb of Henle's loop (TALH), where it promotes formation of complex filamentous gel-like structure that may play a role in the water barrier permeability. May serve as a receptor for binding and endocytosis of cytokines (IL-1, IL-2) and TNF. Facilitates neutrophil migration across renal epithelia. In terms of biological role, in the urine, may contribute to colloid osmotic pressure, retards passage of positively charged electrolytes, and inhibits formation of liquid containing supersaturated salts and subsequent formation of salt crystals. Protects against urinary tract infections by binding to type 1 fimbriated E.coli. Binds to bacterial adhesin fimH which mediates the stable formation of bacterial aggregates, prevents the binding of E.coli to uroplakins UPK1A and UPK1B which act as urothelial receptors for type I fimbriae, and allows for pathogen clearance through micturation. Also promotes aggregation of other bacteria including K.pneumoniae, P.aeruginosa and S.mitis and so may also protect against other uropathogens. This chain is Uromodulin (Umod), found in Rattus norvegicus (Rat).